The following is a 52-amino-acid chain: uncharacterized protein (52 aa).

This is an uncharacterized protein from Bos taurus papillomavirus 4 (Bovine papillomavirus 4).